A 337-amino-acid polypeptide reads, in one-letter code: Glyceraldehyde-3-phosphate dehydrogenase (337 aa).

NAD(+) contacts are provided by residues 12–13 (RI), Asp-34, and Arg-79. D-glyceraldehyde 3-phosphate is bound by residues 150–152 (SCT), Thr-181, 210–211 (TG), and Arg-233. Cys-151 serves as the catalytic Nucleophile. Position 315 (Asn-315) interacts with NAD(+).

It belongs to the glyceraldehyde-3-phosphate dehydrogenase family. As to quaternary structure, homotetramer.

It is found in the cytoplasm. The enzyme catalyses D-glyceraldehyde 3-phosphate + phosphate + NAD(+) = (2R)-3-phospho-glyceroyl phosphate + NADH + H(+). It functions in the pathway carbohydrate degradation; glycolysis; pyruvate from D-glyceraldehyde 3-phosphate: step 1/5. This is Glyceraldehyde-3-phosphate dehydrogenase (GPD) from Omphalotus olearius (Jack o'lantern).